The following is a 416-amino-acid chain: Putative pseudouridine transporter (416 aa).

Residues 1 to 2 lie on the Periplasmic side of the membrane; sequence MD. The helical transmembrane segment at 3–23 threads the bilayer; it reads IMRSVVGMVVLLAIAFLLSVN. At 24-31 the chain is on the cytoplasmic side; the sequence is KKSISLRT. Residues 32-52 form a helical membrane-spanning segment; the sequence is VGAALLLQIAIGGIMLYFPPG. Residues 53–104 lie on the Periplasmic side of the membrane; that stretch reads KWAVEQAALGVHKVMSYSDAGSAFIFGSLVGPKMDVLFDGAGFIFAFRVLPA. The chain crosses the membrane as a helical span at residues 105–125; sequence IIFVTALISLLYYIGVMGLLI. Residues 126–172 are Cytoplasmic-facing; the sequence is RILGSIFQKALNISKIESFVAVTTIFLGQNEIPAIVKPFIDRMNRNE. A helical transmembrane segment spans residues 173–193; the sequence is LFTAICSGMASIAGSMMIGYA. Residues 194 to 196 are Periplasmic-facing; the sequence is GMG. Residues 197-217 form a helical membrane-spanning segment; the sequence is VPIDYLLAASLMAIPGGILFA. At 218 to 268 the chain is on the cytoplasmic side; the sequence is RILSPATEPSQVTFENLSFSETPPKSFIEAAASGAMTGLKIAAGVATVVMA. The chain crosses the membrane as a helical span at residues 269 to 289; it reads FVAIIALINGIIGGIGGWFGF. At 290 to 352 the chain is on the periplasmic side; sequence ANASLESIFG…QTGGTLEVKT (63 aa). Residues 353–373 traverse the membrane as a helical segment; that stretch reads IAIISFALCGFANFGSIGVVV. At 374–394 the chain is on the cytoplasmic side; the sequence is GAFSAISPKRAPEIAQLGLRA. The helical transmembrane segment at 395 to 415 threads the bilayer; that stretch reads LAAATLSNLMSATIAGFFIGL. Position 416 (alanine 416) is a topological domain, periplasmic.

Belongs to the concentrative nucleoside transporter (CNT) (TC 2.A.41) family.

The protein localises to the cell inner membrane. Could be involved in pseudouridine transport. The polypeptide is Putative pseudouridine transporter (psuT) (Escherichia coli (strain K12)).